The chain runs to 257 residues: Imidazole glycerol phosphate synthase subunit HisF (257 aa).

Active-site residues include Asp-12 and Asp-131.

It belongs to the HisA/HisF family. In terms of assembly, heterodimer of HisH and HisF.

The protein localises to the cytoplasm. The catalysed reaction is 5-[(5-phospho-1-deoxy-D-ribulos-1-ylimino)methylamino]-1-(5-phospho-beta-D-ribosyl)imidazole-4-carboxamide + L-glutamine = D-erythro-1-(imidazol-4-yl)glycerol 3-phosphate + 5-amino-1-(5-phospho-beta-D-ribosyl)imidazole-4-carboxamide + L-glutamate + H(+). It participates in amino-acid biosynthesis; L-histidine biosynthesis; L-histidine from 5-phospho-alpha-D-ribose 1-diphosphate: step 5/9. Functionally, IGPS catalyzes the conversion of PRFAR and glutamine to IGP, AICAR and glutamate. The HisF subunit catalyzes the cyclization activity that produces IGP and AICAR from PRFAR using the ammonia provided by the HisH subunit. The chain is Imidazole glycerol phosphate synthase subunit HisF from Burkholderia orbicola (strain MC0-3).